The following is a 72-amino-acid chain: U1-sicaritoxin-Sdo1a (72 aa).

The N-terminal stretch at 1 to 24 is a signal peptide; that stretch reads MMKKFTCFLLCATILCAIFCVSVA. Positions 25–41 are excised as a propeptide; the sequence is EKFHKMKSDIERDETPM. 3 disulfide bridges follow: Cys-43-Cys-61, Cys-50-Cys-64, and Cys-60-Cys-69.

As to expression, expressed by the venom gland.

Its subcellular location is the secreted. In Hexophthalma dolichocephala (Afrotropical spider), this protein is U1-sicaritoxin-Sdo1a.